The primary structure comprises 347 residues: N-acetyl-gamma-glutamyl-phosphate reductase (347 aa).

Residue Cys-152 is part of the active site.

It belongs to the NAGSA dehydrogenase family. Type 1 subfamily.

The protein resides in the cytoplasm. It catalyses the reaction N-acetyl-L-glutamate 5-semialdehyde + phosphate + NADP(+) = N-acetyl-L-glutamyl 5-phosphate + NADPH + H(+). It participates in amino-acid biosynthesis; L-arginine biosynthesis; N(2)-acetyl-L-ornithine from L-glutamate: step 3/4. Catalyzes the NADPH-dependent reduction of N-acetyl-5-glutamyl phosphate to yield N-acetyl-L-glutamate 5-semialdehyde. The sequence is that of N-acetyl-gamma-glutamyl-phosphate reductase from Ehrlichia ruminantium (strain Gardel).